A 961-amino-acid polypeptide reads, in one-letter code: Glycine dehydrogenase (decarboxylating) (961 aa).

Lys-709 is subject to N6-(pyridoxal phosphate)lysine.

Belongs to the GcvP family. The glycine cleavage system is composed of four proteins: P, T, L and H. Pyridoxal 5'-phosphate is required as a cofactor.

The catalysed reaction is N(6)-[(R)-lipoyl]-L-lysyl-[glycine-cleavage complex H protein] + glycine + H(+) = N(6)-[(R)-S(8)-aminomethyldihydrolipoyl]-L-lysyl-[glycine-cleavage complex H protein] + CO2. Its function is as follows. The glycine cleavage system catalyzes the degradation of glycine. The P protein binds the alpha-amino group of glycine through its pyridoxal phosphate cofactor; CO(2) is released and the remaining methylamine moiety is then transferred to the lipoamide cofactor of the H protein. This chain is Glycine dehydrogenase (decarboxylating), found in Streptomyces griseus subsp. griseus (strain JCM 4626 / CBS 651.72 / NBRC 13350 / KCC S-0626 / ISP 5235).